The primary structure comprises 463 residues: MVSKNQFYQNWTMQSQQQHPHQMQQQFQQQQQPNLQHRNNQSNNNNCNNNPRAAAAPYRKPFRSGKINSGPGGNGNGNRVNGNNQMMFSSSQMPSDPLYIDFSSPPPGFKHNQVGSPKKKSMKGIKQQQHPSPNQQQPPSPNQQQHPSPNQQQHPSPNQQQHPNSNQQQHLSPNQQQGKMNNQNNNHMNQSQQPFNNQMNGSDWQRHPGNNPNQIRGGFNGFQRGPPPNRPPPRLMMGPPMGPMGPGPRGPGPMGPGGPYPQMPFPPPVPGMRGPGPMGPMGGPPPPPPPLFMRRNGPGPGPMMGVPPPMHMMGPRMPPRGIPPVGPYGPMNMNGGRIMKPNPKLIKQVVKGKSSIKTLKNLINQYPIEKPWVTDEIRSEHDKKVDIENRLKGHKDDELFAQYKGQRDKFVSLYEAAREEYLKQEAATVKAKDAKSDKDKNAISSQSAAPKAGSAKDATIPNP.

Residues methionine 1–methionine 13 are compositionally biased toward polar residues. Positions methionine 1–methionine 304 are disordered. The segment covering glutamine 14–asparagine 50 has biased composition (low complexity). Positions glutamine 85–proline 94 are enriched in polar residues. 7 consecutive repeat copies span residues methionine 87 to proline 94, serine 95 to phenylalanine 102, serine 103 to lysine 110, histidine 111 to lysine 118, lysine 119 to lysine 126, glutamine 127 to asparagine 134, and glutamine 135 to asparagine 142. The segment at methionine 87–asparagine 142 is 7 X approximate tandem repeats. The segment covering asparagine 142 to glutamine 193 has biased composition (low complexity). Polar residues predominate over residues proline 194 to glutamine 214. Composition is skewed to pro residues over residues glycine 225–proline 270 and glycine 282–leucine 291. The H-T-H motif DNA-binding region spans aspartate 397–alanine 416. The disordered stretch occupies residues alanine 426 to proline 463. A compositionally biased stretch (basic and acidic residues) spans lysine 430–asparagine 441.

Interacts (via N-terminus) with sqd; the interaction is direct and may be involved in localization of sqd to the oocyte during oogenesis.

The protein localises to the nucleus. Functionally, may be involved in localization of sqd to the oocyte during oogenesis. This Drosophila melanogaster (Fruit fly) protein is DNA-binding protein K10 (fs(1)K10).